The sequence spans 88 residues: Small ribosomal subunit protein uS15 (88 aa).

Positions methionine 1–aspartate 20 are enriched in basic and acidic residues. The tract at residues methionine 1 to threonine 21 is disordered.

This sequence belongs to the universal ribosomal protein uS15 family. In terms of assembly, part of the 30S ribosomal subunit. Forms a bridge to the 50S subunit in the 70S ribosome, contacting the 23S rRNA.

In terms of biological role, one of the primary rRNA binding proteins, it binds directly to 16S rRNA where it helps nucleate assembly of the platform of the 30S subunit by binding and bridging several RNA helices of the 16S rRNA. Forms an intersubunit bridge (bridge B4) with the 23S rRNA of the 50S subunit in the ribosome. This is Small ribosomal subunit protein uS15 from Syntrophotalea carbinolica (strain DSM 2380 / NBRC 103641 / GraBd1) (Pelobacter carbinolicus).